A 170-amino-acid polypeptide reads, in one-letter code: Lipoprotein signal peptidase (170 aa).

The next 4 membrane-spanning stretches (helical) occupy residues 11–31 (LSWL…KFYF), 41–61 (IVVI…AAFS), 69–89 (WQRW…VVWL), and 95–115 (NETW…GNLY). Residues Asp125 and Asp144 contribute to the active site. A helical transmembrane segment spans residues 136–156 (YFPAFNFADSAITVGAVMLAL).

The protein belongs to the peptidase A8 family.

The protein localises to the cell inner membrane. The enzyme catalyses Release of signal peptides from bacterial membrane prolipoproteins. Hydrolyzes -Xaa-Yaa-Zaa-|-(S,diacylglyceryl)Cys-, in which Xaa is hydrophobic (preferably Leu), and Yaa (Ala or Ser) and Zaa (Gly or Ala) have small, neutral side chains.. Its pathway is protein modification; lipoprotein biosynthesis (signal peptide cleavage). This protein specifically catalyzes the removal of signal peptides from prolipoproteins. The chain is Lipoprotein signal peptidase from Pseudomonas fluorescens (strain Pf0-1).